The sequence spans 365 residues: MAPKDFFPPAPLDLDWDNIGIKVREVNGHVECAYNVATESWSEPQVVKGIDLTISGLSPALNYGQQAYEGMKAFRDPQGQIHIFRPEVHAARMAHSCEVVSIPPIPQVQFIRSVALAVSVNAEFVPPFDSSAALYIRPLAFGSGPQINLAQPEEYTFCVFVLPVTSLLGTKPVDALIMEEFDRTAPMGSGNAKVGGNYAPVLRWAAKARARGYGIPLHLDSKTRTEIDEFSAAGFIGVRDDDGKTTIVVPDSSCIIQSVTSDSCVQLARSYGWSVEVRPIKYTELPEFSEVLAVGTAAVIVPIGSITRDSLRDLIVYKPSEDGGYPCADKLFKSIKDIQRGLGKDVFNWCVPVHEPGAYFQPVSA.

Residue Arg-92 participates in pyridoxal 5'-phosphate binding. Lys-193 is modified (N6-(pyridoxal phosphate)lysine). Residue Glu-229 participates in pyridoxal 5'-phosphate binding.

This sequence belongs to the class-IV pyridoxal-phosphate-dependent aminotransferase family. The cofactor is pyridoxal 5'-phosphate.

Its pathway is secondary metabolite biosynthesis. In terms of biological role, aminotransferase; part of the gene cluster that mediates the biosynthesis of oxaleimides, cytotoxic compounds containing an unusual disubstituted succinimide moiety. The first step of the pathway is provided by the HR-PKS poxF that serves in a new mode of collaborative biosynthesis with the PKS-NRPS poxE, by providing the olefin containing amino acid substrate via the synthesis of an ACP-bound dec-4-enoate. The cytochrome P450 monooxygenase poxM-catalyzed oxidation at the alpha-position creates the enzyme-bound 2-hydroxydec-4-enoyl-ACP thioester, which may be prone to spontaneous hydrolysis to yield 2-hydroxydec-4-enoic acid due to increased electrophilicity of the carbonyl. 2-hydroxydec-4-enoic acid can then be further oxidized by poxM to yield the alpha-ketoacid 2-oxodec-4-enoicacid, which is reductively aminated by the aminotransferase poxL to yield (S,E)-2-aminodec-4-enoic acid. The Hybrid PKS-NRPS synthetase poxE then performs condensation between the octaketide product of its PKS modules and the amino group of (S,E)-2-aminodec-4-enoic acid which is activated and incorporated by the adenylation domain. The resulting aminoacyl product can be cyclized by the Diels-Alderase PoxQ and reductively released by the reductive (R) domain of poxE to yield an aldehyde intermediate. The released aldehyde is then substrate for a Knoevenagel condensation by the hydrolyase poxO followed by an oxidation at the 5-position of the pyrrolidone ring. The presence of the olefin from the amino acid building block allows for migration of the substituted allyl group to occur. This allylic transposition reaction takes place in a conjugate addition, semipinacol-like fashion to yield a succinimide intermediate. Iterative two-electron oxidations of the C7 methyl of the succinimide intermediate to the carboxylic acid can be catalyzed by one of two remaining cytochrome P450 monooxygenasess poxC or poxD to yield oxaleimide A. Subsequent oxidation yields the maleimide scaffold oxaleimide I. Both oxaleimide A and oxaleimide I can undergo oxidative modifications in the decalin ring to yield the series of products oxaleimides B to H. The sequence is that of Aminotransferase poxL from Penicillium oxalicum (strain 114-2 / CGMCC 5302) (Penicillium decumbens).